A 254-amino-acid chain; its full sequence is Triosephosphate isomerase (254 aa).

9–11 serves as a coordination point for substrate; sequence NWK. H96 serves as the catalytic Electrophile. Catalysis depends on E169, which acts as the Proton acceptor. Residues G175, S215, and 236–237 contribute to the substrate site; that span reads GG.

Belongs to the triosephosphate isomerase family. In terms of assembly, homodimer.

It is found in the cytoplasm. It carries out the reaction D-glyceraldehyde 3-phosphate = dihydroxyacetone phosphate. Its pathway is carbohydrate biosynthesis; gluconeogenesis. It participates in carbohydrate degradation; glycolysis; D-glyceraldehyde 3-phosphate from glycerone phosphate: step 1/1. In terms of biological role, involved in the gluconeogenesis. Catalyzes stereospecifically the conversion of dihydroxyacetone phosphate (DHAP) to D-glyceraldehyde-3-phosphate (G3P). The sequence is that of Triosephosphate isomerase from Borrelia duttonii (strain Ly).